The sequence spans 300 residues: Metal tolerance protein 12 (300 aa).

At 1 to 26 (MESPESFSTMFMKPIRHILSEKKSRK) the chain is on the cytoplasmic side. A helical membrane pass occupies residues 27-47 (IALFLLINTAYMVVEFVAGFM). Residues 48–50 (SNS) are Vacuolar-facing. The chain crosses the membrane as a helical span at residues 51–71 (LGLISDACHMLFDCAALAIGL). Residues 72 to 91 (YASYISRLPANHQYNYGRGR) are Cytoplasmic-facing. Residues 92–112 (FEVLSGYVNAVFLVLVGALIV) traverse the membrane as a helical segment. Over 113-128 (LESIERILDPQEISTN) the chain is Vacuolar. The helical transmembrane segment at 129–149 (SLLVVSVGGLLVNIVGLIFFH) threads the bilayer. Residues 150 to 160 (EEHHHAHGGSG) are Cytoplasmic-facing. A helical transmembrane segment spans residues 161 to 181 (IFLHVLADTMGSVGVVISTLL). Over 182 to 186 (IKYKG) the chain is Vacuolar. A helical membrane pass occupies residues 187–207 (WLVADPASSIFISILIIASVI). Topologically, residues 208–300 (PLLRNSAEIL…WTLQVESVNS (93 aa)) are cytoplasmic.

It belongs to the cation diffusion facilitator (CDF) transporter (TC 2.A.4) family. SLC30A subfamily.

The protein localises to the vacuole membrane. In terms of biological role, involved in sequestration of excess metal in the cytoplasm into vacuoles to maintain metal homeostasis. The sequence is that of Metal tolerance protein 12 (MTP12) from Arabidopsis thaliana (Mouse-ear cress).